The primary structure comprises 180 residues: Flavin prenyltransferase UbiX (180 aa).

FMN contacts are provided by residues 9-11 (GAS), S33, 84-87 (SITT), and R119. Y149 and R165 together coordinate dimethylallyl phosphate.

The protein belongs to the UbiX/PAD1 family.

It catalyses the reaction dimethylallyl phosphate + FMNH2 = prenylated FMNH2 + phosphate. Flavin prenyltransferase that catalyzes the synthesis of the prenylated FMN cofactor (prenyl-FMN) for 4-hydroxy-3-polyprenylbenzoic acid decarboxylase UbiD. The prenyltransferase is metal-independent and links a dimethylallyl moiety from dimethylallyl monophosphate (DMAP) to the flavin N5 and C6 atoms of FMN. This is Flavin prenyltransferase UbiX from Thermoplasma acidophilum (strain ATCC 25905 / DSM 1728 / JCM 9062 / NBRC 15155 / AMRC-C165).